Consider the following 73-residue polypeptide: Toxin Td4 (73 aa).

The N-terminal stretch at 1 to 7 is a signal peptide; the sequence is IGMVVEC. Residues 8-70 enclose the LCN-type CS-alpha/beta domain; that stretch reads KDGYLVGNDG…TWDRATNRCG (63 aa). Disulfide bonds link Cys18/Cys69, Cys22/Cys44, Cys30/Cys50, and Cys34/Cys52. Arginine amide is present on Arg71.

It belongs to the long (4 C-C) scorpion toxin superfamily. Sodium channel inhibitor family. Beta subfamily. As to expression, expressed by the venom gland.

The protein localises to the secreted. Beta toxins bind voltage-independently at site-4 of sodium channels (Nav) and shift the voltage of activation toward more negative potentials thereby affecting sodium channel activation and promoting spontaneous and repetitive firing. This is Toxin Td4 from Tityus discrepans (Venezuelan scorpion).